Reading from the N-terminus, the 345-residue chain is Nicotinate-nucleotide--dimethylbenzimidazole phosphoribosyltransferase (345 aa).

Glu311 acts as the Proton acceptor in catalysis.

This sequence belongs to the CobT family.

The catalysed reaction is 5,6-dimethylbenzimidazole + nicotinate beta-D-ribonucleotide = alpha-ribazole 5'-phosphate + nicotinate + H(+). The protein operates within nucleoside biosynthesis; alpha-ribazole biosynthesis; alpha-ribazole from 5,6-dimethylbenzimidazole: step 1/2. In terms of biological role, catalyzes the synthesis of alpha-ribazole-5'-phosphate from nicotinate mononucleotide (NAMN) and 5,6-dimethylbenzimidazole (DMB). The sequence is that of Nicotinate-nucleotide--dimethylbenzimidazole phosphoribosyltransferase from Janthinobacterium sp. (strain Marseille) (Minibacterium massiliensis).